Consider the following 444-residue polypeptide: Histidinol dehydrogenase (444 aa).

NAD(+)-binding residues include Tyr-135, Gln-199, and Asn-227. Substrate-binding residues include Thr-250, Gln-272, and His-275. The Zn(2+) site is built by Gln-272 and His-275. Active-site proton acceptor residues include Glu-341 and His-342. The substrate site is built by His-342, Asp-375, Glu-429, and His-434. Zn(2+) is bound at residue Asp-375. A Zn(2+)-binding site is contributed by His-434.

The protein belongs to the histidinol dehydrogenase family. Zn(2+) serves as cofactor.

It catalyses the reaction L-histidinol + 2 NAD(+) + H2O = L-histidine + 2 NADH + 3 H(+). It functions in the pathway amino-acid biosynthesis; L-histidine biosynthesis; L-histidine from 5-phospho-alpha-D-ribose 1-diphosphate: step 9/9. Its function is as follows. Catalyzes the sequential NAD-dependent oxidations of L-histidinol to L-histidinaldehyde and then to L-histidine. This is Histidinol dehydrogenase (hisD) from Mycobacterium bovis (strain ATCC BAA-935 / AF2122/97).